Here is a 223-residue protein sequence, read N- to C-terminus: Phosphoribosylformylglycinamidine synthase subunit PurQ (223 aa).

Residues 3 to 223 (FAVLVFPGSN…MVKSWREQHV (221 aa)) form the Glutamine amidotransferase type-1 domain. Cys-85 acts as the Nucleophile in catalysis. Residues His-193 and Glu-195 contribute to the active site.

As to quaternary structure, part of the FGAM synthase complex composed of 1 PurL, 1 PurQ and 2 PurS subunits.

The protein resides in the cytoplasm. It carries out the reaction N(2)-formyl-N(1)-(5-phospho-beta-D-ribosyl)glycinamide + L-glutamine + ATP + H2O = 2-formamido-N(1)-(5-O-phospho-beta-D-ribosyl)acetamidine + L-glutamate + ADP + phosphate + H(+). The catalysed reaction is L-glutamine + H2O = L-glutamate + NH4(+). It functions in the pathway purine metabolism; IMP biosynthesis via de novo pathway; 5-amino-1-(5-phospho-D-ribosyl)imidazole from N(2)-formyl-N(1)-(5-phospho-D-ribosyl)glycinamide: step 1/2. In terms of biological role, part of the phosphoribosylformylglycinamidine synthase complex involved in the purines biosynthetic pathway. Catalyzes the ATP-dependent conversion of formylglycinamide ribonucleotide (FGAR) and glutamine to yield formylglycinamidine ribonucleotide (FGAM) and glutamate. The FGAM synthase complex is composed of three subunits. PurQ produces an ammonia molecule by converting glutamine to glutamate. PurL transfers the ammonia molecule to FGAR to form FGAM in an ATP-dependent manner. PurS interacts with PurQ and PurL and is thought to assist in the transfer of the ammonia molecule from PurQ to PurL. The sequence is that of Phosphoribosylformylglycinamidine synthase subunit PurQ from Staphylococcus aureus (strain MSSA476).